The following is a 419-amino-acid chain: Ras association domain-containing protein 8 (419 aa).

Residues 1–82 enclose the Ras-associating domain; sequence MELKVWVDGV…VQLILRRTGP (82 aa). Phosphoserine is present on residues S105 and S129. Position 131 is a phosphothreonine (T131). The tract at residues 372–399 is disordered; it reads ASQADIETEAPFQSGSLKRPGSSRQLPS. Polar residues predominate over residues 382–399; the sequence is PFQSGSLKRPGSSRQLPS. At S387 the chain carries Phosphoserine.

The protein is Ras association domain-containing protein 8 (Rassf8) of Mus musculus (Mouse).